Here is a 647-residue protein sequence, read N- to C-terminus: Acetyl-coenzyme A synthetase (647 aa).

CoA contacts are provided by residues 192 to 195, Thr310, and Asn334; that span reads RGGR. Residues 386 to 388, 410 to 415, Asp499, and Arg514 contribute to the ATP site; these read GEP and DTWWQT. Ser522 provides a ligand contact to CoA. Arg525 is a binding site for ATP. Positions 536, 538, and 541 each coordinate Mg(2+). Arg583 is a CoA binding site. Lys608 bears the N6-acetyllysine mark.

Belongs to the ATP-dependent AMP-binding enzyme family. It depends on Mg(2+) as a cofactor. In terms of processing, acetylated. Deacetylation by the SIR2-homolog deacetylase activates the enzyme.

The enzyme catalyses acetate + ATP + CoA = acetyl-CoA + AMP + diphosphate. Catalyzes the conversion of acetate into acetyl-CoA (AcCoA), an essential intermediate at the junction of anabolic and catabolic pathways. AcsA undergoes a two-step reaction. In the first half reaction, AcsA combines acetate with ATP to form acetyl-adenylate (AcAMP) intermediate. In the second half reaction, it can then transfer the acetyl group from AcAMP to the sulfhydryl group of CoA, forming the product AcCoA. This is Acetyl-coenzyme A synthetase from Caulobacter vibrioides (strain ATCC 19089 / CIP 103742 / CB 15) (Caulobacter crescentus).